We begin with the raw amino-acid sequence, 371 residues long: 3-isopropylmalate dehydrogenase (371 aa).

The residue at position 55 (Thr55) is a Phosphothreonine. An NAD(+)-binding site is contributed by 78 to 89 (GPEWTNPNCRPE). Substrate is bound by residues Arg96, Arg106, Arg135, and Asp224. 3 residues coordinate Mg(2+): Asp224, Asp249, and Asp253. An NAD(+)-binding site is contributed by 290 to 302 (GSAPDIAGKGIVN).

This sequence belongs to the isocitrate and isopropylmalate dehydrogenases family. As to quaternary structure, homodimer. Mg(2+) serves as cofactor. Mn(2+) is required as a cofactor.

The protein localises to the cytoplasm. It carries out the reaction (2R,3S)-3-isopropylmalate + NAD(+) = 4-methyl-2-oxopentanoate + CO2 + NADH. Its pathway is amino-acid biosynthesis; L-leucine biosynthesis; L-leucine from 3-methyl-2-oxobutanoate: step 3/4. Its function is as follows. Catalyzes the oxidation of 3-carboxy-2-hydroxy-4-methylpentanoate (3-isopropylmalate) to 3-carboxy-4-methyl-2-oxopentanoate. The product decarboxylates to 4-methyl-2 oxopentanoate. This chain is 3-isopropylmalate dehydrogenase (leu1), found in Schizosaccharomyces pombe (strain 972 / ATCC 24843) (Fission yeast).